The chain runs to 183 residues: Peptidyl-tRNA hydrolase (183 aa).

Y15 contributes to the tRNA binding site. H20 serves as the catalytic Proton acceptor. 2 residues coordinate tRNA: Y67 and N69.

The protein belongs to the PTH family. Monomer.

It is found in the cytoplasm. The catalysed reaction is an N-acyl-L-alpha-aminoacyl-tRNA + H2O = an N-acyl-L-amino acid + a tRNA + H(+). Functionally, hydrolyzes ribosome-free peptidyl-tRNAs (with 1 or more amino acids incorporated), which drop off the ribosome during protein synthesis, or as a result of ribosome stalling. In terms of biological role, catalyzes the release of premature peptidyl moieties from peptidyl-tRNA molecules trapped in stalled 50S ribosomal subunits, and thus maintains levels of free tRNAs and 50S ribosomes. This chain is Peptidyl-tRNA hydrolase, found in Chlamydia caviae (strain ATCC VR-813 / DSM 19441 / 03DC25 / GPIC) (Chlamydophila caviae).